Consider the following 877-residue polypeptide: (E,E)-geranyllinalool synthase (877 aa).

Residues Asp540 and Asp544 each coordinate Mg(2+). Substrate contacts are provided by Asp540, Asp544, Arg677, and Asn680. A DDXXD motif motif is present at residues 540–544 (DDFFD). 3 residues coordinate Mg(2+): Asn680, Ser684, and Glu688.

It belongs to the terpene synthase family. Tpsf subfamily. Requires Mg(2+) as cofactor. It depends on Mn(2+) as a cofactor. As to expression, expressed in leaves and flowers.

It is found in the cytoplasm. It catalyses the reaction (2E,6E,10E)-geranylgeranyl diphosphate + H2O = (6E,10E)-geranyllinalool + diphosphate. The protein operates within secondary metabolite biosynthesis; terpenoid biosynthesis. Its function is as follows. Involved in the biosynthesis of homoterpenes, attractants of herbivores parasitoids and predators (e.g. predatory mites and parasitoid wasps). Involved in diterpene (C20) biosynthesis. Catalyzes the conversion of geranylgeranyl diphosphate to (E,E)-geranyllinalool, the precursor of the insect-induced volatile C16-homoterpene TMTT. The protein is (E,E)-geranyllinalool synthase of Arabidopsis thaliana (Mouse-ear cress).